A 123-amino-acid polypeptide reads, in one-letter code: Fluoride-specific ion channel FluC 1 (123 aa).

3 helical membrane passes run 33–53 (TFLI…LFGV), 59–79 (YGTM…TTFS), and 98–118 (VFYL…GAML). Glycine 73 and threonine 76 together coordinate Na(+).

It belongs to the fluoride channel Fluc/FEX (TC 1.A.43) family.

The protein resides in the cell inner membrane. It carries out the reaction fluoride(in) = fluoride(out). With respect to regulation, na(+) is not transported, but it plays an essential structural role and its presence is essential for fluoride channel function. Its function is as follows. Fluoride-specific ion channel. Important for reducing fluoride concentration in the cell, thus reducing its toxicity. The chain is Fluoride-specific ion channel FluC 1 from Brucella melitensis biotype 1 (strain ATCC 23456 / CCUG 17765 / NCTC 10094 / 16M).